Here is a 252-residue protein sequence, read N- to C-terminus: MNDFSLELPVRTNKPRETGQSILIDNGYPLQFFKDAIAGASDYIDFVKFGWGTSLLTKDLEEKISTLKEHDITFFFGGTLFEKYVSQKKVNEFHRYCTYFGCEYIEISNGTLPMTNKEKAAYIADFSDEFLVLSEVGSKDAELASRQSSEEWLEYIVEDMEAGAEKVITEARESGTGGICSSSGDVRFQIVDDIISSDIDINRLIFEAPNKTLQQGFIQKIGPNVNLANIPFHDAIALETLRLGLRSDTFFL.

Belongs to the phosphosulfolactate synthase family.

The catalysed reaction is (2R)-O-phospho-3-sulfolactate = phosphoenolpyruvate + sulfite + H(+). Catalyzes the addition of sulfite to phosphoenolpyruvate (PEP) to yield (2R)-phospho-3-sulfolactate (PSL). Is probably involved in the biosynthesis of L-sulfolactate, which is a major constituent of sporulating cells and mature spores. The chain is Phosphosulfolactate synthase (yitD) from Bacillus subtilis (strain 168).